An 880-amino-acid chain; its full sequence is MVDTKNPGDKTLSVSPSKTLTLKRGVEQGTVRQSFSHGRTKQVVVEKRGKRRVGGDGPADAPAAPAPVAAAKPAPVRAPMSRPPQSSHRGGGSGVVLRTLTEDERTARASALADARIRDEEERKAAEAELARRNSKEGIEQAEREAAEARKKAEEERHRQDEEAKRKAELEAKKRFGEEEAKKAAAAAPAKTTAATTATAAKPGAPARAPGVAADATDEDEGPRQIRRGPGGAARPVVAPKPTAKPAPAKQRGRLTLVTALSADDVRERSIASFRRRTQRLKGHQSNEPKEKLVREVIIPEAITIQELANRMAERAVDVIRMLMKQGQMVKITDVIDADTAQLIAEELGHSVKRVAASDVEEGLFDIVDDATDTEPRSPVVTVMGHVDHGKTSLLDALRHANVVSGEAGGITQHIGAYQVTSPESGKKITFIDTPGHAAFTAMRARGAKVTDIVVLVVAADDGVMPQTIEAINHAKAAKVPVIVAINKIDKQDAKPERVRTELLQYGIQVESLGGDVVDVEVSAKNKTNLDKLLEMIALQAELLDLKTNTERPAEGTVIEAKLDRGRGPVATVLVQRGTLRVGDIIVAGAEMGRVRALISDQGVTLTEAGPSVPVEVLGFNGPPEAGDRMAVVDSEARARQVTSYRAHQKREKSASAVSGLRGSLEQMMSQLKTTGRKDFPLIIKADVAGSLEAILGSLEKLGTDEVTARILHAGVGGISESDVTLAEGFNAAIIGFNVRAHKEAAAAAKRNGIEIRYYNIIYDLVDDVKKAMSGLLAPTLRETMLGNALILEVFNISKVGKVAGCRVTDGSVERGANVRLIRDNVVVHEGKLSTLKRFKDEVKEVQSGQECGMAFENYGDMRAGDIIECYRVETIQRSL.

A disordered region spans residues 1–251 (MVDTKNPGDK…PTAKPAPAKQ (251 aa)). The span at 58–79 (PADAPAAPAPVAAAKPAPVRAP) shows a compositional bias: low complexity. The segment covering 115–183 (ARIRDEEERK…KRFGEEEAKK (69 aa)) has biased composition (basic and acidic residues). Low complexity-rich tracts occupy residues 184–215 (AAAAAPAKTTAATTATAAKPGAPARAPGVAAD) and 233–250 (AARPVVAPKPTAKPAPAK). Residues 376–547 (PRSPVVTVMG…ALQAELLDLK (172 aa)) enclose the tr-type G domain. Residues 385 to 392 (GHVDHGKT) form a G1 region. A GTP-binding site is contributed by 385–392 (GHVDHGKT). The interval 410–414 (GITQH) is G2. The interval 433–436 (DTPG) is G3. Residues 433–437 (DTPGH) and 487–490 (NKID) contribute to the GTP site. Positions 487-490 (NKID) are G4. The G5 stretch occupies residues 523–525 (SAK).

This sequence belongs to the TRAFAC class translation factor GTPase superfamily. Classic translation factor GTPase family. IF-2 subfamily.

It localises to the cytoplasm. In terms of biological role, one of the essential components for the initiation of protein synthesis. Protects formylmethionyl-tRNA from spontaneous hydrolysis and promotes its binding to the 30S ribosomal subunits. Also involved in the hydrolysis of GTP during the formation of the 70S ribosomal complex. The protein is Translation initiation factor IF-2 of Rhodopseudomonas palustris (strain BisB18).